The primary structure comprises 93 residues: Large ribosomal subunit protein uL23 (93 aa).

The protein belongs to the universal ribosomal protein uL23 family. Part of the 50S ribosomal subunit. Contacts protein L29, and trigger factor when it is bound to the ribosome.

Its function is as follows. One of the early assembly proteins it binds 23S rRNA. One of the proteins that surrounds the polypeptide exit tunnel on the outside of the ribosome. Forms the main docking site for trigger factor binding to the ribosome. The chain is Large ribosomal subunit protein uL23 from Helicobacter acinonychis (strain Sheeba).